The sequence spans 286 residues: MENSMKKKKSFKESEDEELRRGPWTLEEDTLLTNYILHNGEGRWNHVAKCAGLKRTGKSCRLRWLNYLKPDIRRGNLTPQEQLLILELHSKWGNRWSKIAQYLPGRTDNEIKNYWRTRVQKQARQLNIESNSDKFFDAVRSFWVPRLIEKMEQNSSTTTTYCCPQNNNNNSLLLPSQSHDSLSMQKDIDYSGFSNIDGSSSTSTCMSHLTTVPHFMDQSNTNIIDGSMCFHEGNVQEFGGYVPGMEDYMVNSDISMECHVADGYSAYEDVTQDPMWNVDDIWQFRE.

2 consecutive HTH myb-type domains span residues 16 to 68 (DEEL…LNYL) and 69 to 123 (KPDI…QKQA). 2 consecutive DNA-binding regions (H-T-H motif) follow at residues 44–68 (WNHV…LNYL) and 96–119 (WSKI…RTRV).

Expressed in leaves and flowers.

It is found in the nucleus. In terms of biological role, transcription repressor of phosphate (Pi) starvation-induced genes. Negatively regulates Pi starvation responses via the repression of gibberellic acid (GA) biosynthesis and signaling. Modulates root architecture, phosphatase activity, and Pi uptake and accumulation. This is Transcription factor MYB62 from Arabidopsis thaliana (Mouse-ear cress).